Here is a 215-residue protein sequence, read N- to C-terminus: MNRSSNSAFAPTEKKLGLYPVVDSIEWVERLLKIGVTTIQLRIKDKQPKDVEQDIITAIKLGRKYNARLFINDYWQLAIKHHAYGVHLGQEDLDIADLDAIKQSGLCLGISTHNDTELQRAKRLLPSYIALGHIFPTTTKDMPSKPQGLRALKHQVEQTHDFPTVAIGGISLEKVSDVVATGVGGVALVSAITKASDWQQVTLKLLELVEGKPSC.

4-amino-2-methyl-5-(diphosphooxymethyl)pyrimidine is bound by residues 40-44 and Asn72; that span reads QLRIK. Residues Asp73 and Asp92 each coordinate Mg(2+). Position 111 (Ser111) interacts with 4-amino-2-methyl-5-(diphosphooxymethyl)pyrimidine. A 2-[(2R,5Z)-2-carboxy-4-methylthiazol-5(2H)-ylidene]ethyl phosphate-binding site is contributed by 137–139; the sequence is TTT. Lys140 contributes to the 4-amino-2-methyl-5-(diphosphooxymethyl)pyrimidine binding site. Residues Gly169 and 189-190 contribute to the 2-[(2R,5Z)-2-carboxy-4-methylthiazol-5(2H)-ylidene]ethyl phosphate site; that span reads VS.

This sequence belongs to the thiamine-phosphate synthase family. The cofactor is Mg(2+).

The enzyme catalyses 2-[(2R,5Z)-2-carboxy-4-methylthiazol-5(2H)-ylidene]ethyl phosphate + 4-amino-2-methyl-5-(diphosphooxymethyl)pyrimidine + 2 H(+) = thiamine phosphate + CO2 + diphosphate. It catalyses the reaction 2-(2-carboxy-4-methylthiazol-5-yl)ethyl phosphate + 4-amino-2-methyl-5-(diphosphooxymethyl)pyrimidine + 2 H(+) = thiamine phosphate + CO2 + diphosphate. It carries out the reaction 4-methyl-5-(2-phosphooxyethyl)-thiazole + 4-amino-2-methyl-5-(diphosphooxymethyl)pyrimidine + H(+) = thiamine phosphate + diphosphate. It functions in the pathway cofactor biosynthesis; thiamine diphosphate biosynthesis; thiamine phosphate from 4-amino-2-methyl-5-diphosphomethylpyrimidine and 4-methyl-5-(2-phosphoethyl)-thiazole: step 1/1. Condenses 4-methyl-5-(beta-hydroxyethyl)thiazole monophosphate (THZ-P) and 2-methyl-4-amino-5-hydroxymethyl pyrimidine pyrophosphate (HMP-PP) to form thiamine monophosphate (TMP). The chain is Thiamine-phosphate synthase from Proteus mirabilis (strain HI4320).